A 314-amino-acid chain; its full sequence is Homoserine O-acetyltransferase (314 aa).

Catalysis depends on Cys-142, which acts as the Acyl-thioester intermediate. Substrate is bound by residues Lys-163 and Ser-192. His-235 serves as the catalytic Proton acceptor. The active site involves Glu-237. Arg-249 serves as a coordination point for substrate.

It belongs to the MetA family.

The protein resides in the cytoplasm. The catalysed reaction is L-homoserine + acetyl-CoA = O-acetyl-L-homoserine + CoA. Its pathway is amino-acid biosynthesis; L-methionine biosynthesis via de novo pathway; O-acetyl-L-homoserine from L-homoserine: step 1/1. Its function is as follows. Transfers an acetyl group from acetyl-CoA to L-homoserine, forming acetyl-L-homoserine. This chain is Homoserine O-acetyltransferase, found in Streptococcus thermophilus (strain ATCC BAA-250 / LMG 18311).